A 161-amino-acid chain; its full sequence is Nucleotide-binding protein Gmet_3206 (161 aa).

Belongs to the YajQ family.

Nucleotide-binding protein. The sequence is that of Nucleotide-binding protein Gmet_3206 from Geobacter metallireducens (strain ATCC 53774 / DSM 7210 / GS-15).